The following is a 201-amino-acid chain: Guanylate kinase (201 aa).

The region spanning 2–180 (SCLFVISAPS…AARDVASIVQ (179 aa)) is the Guanylate kinase-like domain. 9 to 16 (APSGAGKT) is a binding site for ATP.

The protein belongs to the guanylate kinase family.

It is found in the cytoplasm. It carries out the reaction GMP + ATP = GDP + ADP. Functionally, essential for recycling GMP and indirectly, cGMP. This is Guanylate kinase from Nitrosomonas europaea (strain ATCC 19718 / CIP 103999 / KCTC 2705 / NBRC 14298).